The following is a 304-amino-acid chain: UDP-3-O-acyl-N-acetylglucosamine deacetylase (304 aa).

3 residues coordinate Zn(2+): His-78, His-237, and Asp-241. His-264 acts as the Proton donor in catalysis.

Belongs to the LpxC family. Zn(2+) is required as a cofactor.

The enzyme catalyses a UDP-3-O-[(3R)-3-hydroxyacyl]-N-acetyl-alpha-D-glucosamine + H2O = a UDP-3-O-[(3R)-3-hydroxyacyl]-alpha-D-glucosamine + acetate. Its pathway is glycolipid biosynthesis; lipid IV(A) biosynthesis; lipid IV(A) from (3R)-3-hydroxytetradecanoyl-[acyl-carrier-protein] and UDP-N-acetyl-alpha-D-glucosamine: step 2/6. Its function is as follows. Catalyzes the hydrolysis of UDP-3-O-myristoyl-N-acetylglucosamine to form UDP-3-O-myristoylglucosamine and acetate, the committed step in lipid A biosynthesis. The protein is UDP-3-O-acyl-N-acetylglucosamine deacetylase of Xylella fastidiosa (strain 9a5c).